Reading from the N-terminus, the 101-residue chain is Small ribosomal subunit protein uS14 (101 aa).

Belongs to the universal ribosomal protein uS14 family. In terms of assembly, part of the 30S ribosomal subunit. Contacts proteins S3 and S10.

Its function is as follows. Binds 16S rRNA, required for the assembly of 30S particles and may also be responsible for determining the conformation of the 16S rRNA at the A site. The sequence is that of Small ribosomal subunit protein uS14 from Opitutus terrae (strain DSM 11246 / JCM 15787 / PB90-1).